A 335-amino-acid chain; its full sequence is Glyceraldehyde-3-phosphate dehydrogenase (335 aa).

Residues 12–13 (RI), aspartate 34, arginine 78, and serine 120 each bind NAD(+). D-glyceraldehyde 3-phosphate contacts are provided by residues 151–153 (SCT) and threonine 182. Cysteine 152 (nucleophile) is an active-site residue. NAD(+) is bound at residue asparagine 183. D-glyceraldehyde 3-phosphate-binding positions include arginine 197, 210–211 (TG), and arginine 233. Position 315 (asparagine 315) interacts with NAD(+).

This sequence belongs to the glyceraldehyde-3-phosphate dehydrogenase family. As to quaternary structure, homotetramer.

It is found in the cytoplasm. It catalyses the reaction D-glyceraldehyde 3-phosphate + phosphate + NAD(+) = (2R)-3-phospho-glyceroyl phosphate + NADH + H(+). It functions in the pathway carbohydrate degradation; glycolysis; pyruvate from D-glyceraldehyde 3-phosphate: step 1/5. Functionally, catalyzes the oxidative phosphorylation of glyceraldehyde 3-phosphate (G3P) to 1,3-bisphosphoglycerate (BPG) using the cofactor NAD. The first reaction step involves the formation of a hemiacetal intermediate between G3P and a cysteine residue, and this hemiacetal intermediate is then oxidized to a thioester, with concomitant reduction of NAD to NADH. The reduced NADH is then exchanged with the second NAD, and the thioester is attacked by a nucleophilic inorganic phosphate to produce BPG. This chain is Glyceraldehyde-3-phosphate dehydrogenase (gap), found in Priestia megaterium (strain DSM 319 / IMG 1521) (Bacillus megaterium).